The chain runs to 215 residues: Adenylate kinase (215 aa).

An ATP-binding site is contributed by 10–15; that stretch reads GAGKGT. The segment at 30–59 is NMP; the sequence is STGDMLRAAVKAETELGLKAKSVMDSGGLV. Residues Thr31, Arg36, 57-59, 85-88, and Gln92 contribute to the AMP site; these read GLV and GFPR. The interval 122–159 is LID; that stretch reads GRRVHEGSGRIYHTIFNPPKVEGIDDVTGEPLLQRKDD. Residues Arg123 and 132-133 each bind ATP; that span reads IY. AMP-binding residues include Arg156 and Arg167. Gly201 is a binding site for ATP.

It belongs to the adenylate kinase family. Monomer.

Its subcellular location is the cytoplasm. The enzyme catalyses AMP + ATP = 2 ADP. The protein operates within purine metabolism; AMP biosynthesis via salvage pathway; AMP from ADP: step 1/1. In terms of biological role, catalyzes the reversible transfer of the terminal phosphate group between ATP and AMP. Plays an important role in cellular energy homeostasis and in adenine nucleotide metabolism. The chain is Adenylate kinase from Pseudomonas syringae pv. syringae (strain B728a).